A 287-amino-acid chain; its full sequence is AA9 family lytic polysaccharide monooxygenase C (287 aa).

The signal sequence occupies residues 1–16 (MKSVLVALATATAVSA). Residue histidine 17 participates in Cu(2+) binding. A glycan (N-linked (GlcNAc...) asparagine) is linked at asparagine 22. 2 disulfide bridges follow: cysteine 77/cysteine 230 and cysteine 200/cysteine 284. Cu(2+) is bound at residue histidine 114. Histidine 216 and glutamine 225 together coordinate O2. Residue tyrosine 227 coordinates Cu(2+).

It belongs to the polysaccharide monooxygenase AA9 family. Requires Cu(2+) as cofactor.

Its subcellular location is the secreted. The enzyme catalyses [(1-&gt;4)-beta-D-glucosyl]n+m + reduced acceptor + O2 = 4-dehydro-beta-D-glucosyl-[(1-&gt;4)-beta-D-glucosyl]n-1 + [(1-&gt;4)-beta-D-glucosyl]m + acceptor + H2O.. In terms of biological role, lytic polysaccharide monooxygenase (LPMO) that depolymerizes crystalline and amorphous polysaccharides via the oxidation of scissile alpha- or beta-(1-4)-glycosidic bonds, yielding C1 or C4 oxidation products. Catalysis by LPMOs requires the reduction of the active-site copper from Cu(II) to Cu(I) by a reducing agent and H(2)O(2) or O(2) as a cosubstrate. The polypeptide is AA9 family lytic polysaccharide monooxygenase C (Podospora anserina (strain S / ATCC MYA-4624 / DSM 980 / FGSC 10383) (Pleurage anserina)).